The sequence spans 862 residues: DNA mismatch repair protein MutS (862 aa).

608 to 615 provides a ligand contact to ATP; that stretch reads GPNMAGKS.

Belongs to the DNA mismatch repair MutS family.

Its function is as follows. This protein is involved in the repair of mismatches in DNA. It is possible that it carries out the mismatch recognition step. This protein has a weak ATPase activity. In Bacteroides thetaiotaomicron (strain ATCC 29148 / DSM 2079 / JCM 5827 / CCUG 10774 / NCTC 10582 / VPI-5482 / E50), this protein is DNA mismatch repair protein MutS.